Consider the following 311-residue polypeptide: Short chain dehydrogenase opdN (311 aa).

Positions 48, 73, 96, 123, 217, and 221 each coordinate NADP(+). Residue Y217 is the Proton donor of the active site. Residue K221 is the Lowers pKa of active site Tyr of the active site.

Belongs to the short-chain dehydrogenases/reductases (SDR) family.

The protein operates within secondary metabolite biosynthesis. Its function is as follows. Short chain dehydrogenase; part of the gene cluster that mediates the biosynthesis of oxopyrrolidines, polyketide-amino acid hybrid compounds with feature structures of tetramic acid. Does not seem to play a role in oxopyrrolidines A and B biosynthesis. May be involved in further modifications of these oxopyrrolidines. The chain is Short chain dehydrogenase opdN from Penicillium oxalicum (strain 114-2 / CGMCC 5302) (Penicillium decumbens).